The chain runs to 355 residues: Protein ATP1B4 (355 aa).

Residues 1–108 are Nuclear-facing; the sequence is MRRQLRSRRA…SLARTGQSLS (108 aa). The disordered stretch occupies residues 35–76; sequence EEEEAEEARVMVVPDLEEEEKEEEEEKEEDEKEEEESHHQDT. Residues 49 to 68 show a composition bias toward acidic residues; sequence DLEEEEKEEEEEKEEDEKEE. A helical; Signal-anchor for type II membrane protein transmembrane segment spans residues 109–129; sequence LLLVIYFFFYASLAAVITLCM. At 130-355 the chain is on the perinuclear space side; it reads YTLFLTISPY…RVIFTLNIET (226 aa).

Belongs to the X(+)/potassium ATPases subunit beta family. As to quaternary structure, associates with a SMAD7-transcriptional complex. Interacts with SNW1 and TOR1AIP1. Does not associate with known Na,K-ATPase alpha-subunits. As to expression, expressed in skeletal muscle (at protein level). Expressed during postnatal development in skeletal muscle and heart.

It is found in the nucleus inner membrane. Functionally, may act as a transcriptional coregulator during muscle development through its interaction with SNW1. Has lost its ancestral function as a Na,K-ATPase beta-subunit. In Sus scrofa (Pig), this protein is Protein ATP1B4 (ATP1B4).